Reading from the N-terminus, the 146-residue chain is Mitochondrial DnaJ homolog 2 (146 aa).

The J domain occupies 85–146 (EALLILDISA…LERSVLLRKR (62 aa)).

As to quaternary structure, interacts with PAM16/TIM16 and is recruited by the PAM complex.

The protein localises to the mitochondrion inner membrane. In terms of biological role, plays a role in mitochondrial biogenesis and protein folding. Participates in the translocation of transit peptide-containing proteins from the inner membrane into the mitochondrial matrix in an ATP-dependent manner, probably by stimulating activity of mtHSP70 (SSC1). This Saccharomyces cerevisiae (strain ATCC 204508 / S288c) (Baker's yeast) protein is Mitochondrial DnaJ homolog 2 (MDJ2).